Here is a 580-residue protein sequence, read N- to C-terminus: Putative monoterpene synthase 8 (580 aa).

A chloroplast-targeting transit peptide spans 1–44; the sequence is MACTSNLSSLSKSWAVLDVPRGAPKATGLWLKRQFIFKTSRICM. Mg(2+) is bound by residues Asp-333, Asp-337, Asp-478, Thr-482, and Glu-486. The short motif at 333 to 337 is the DDXXD motif element; sequence DDIFD.

The protein belongs to the terpene synthase family. Tpsg subfamily. Monomer. Mg(2+) is required as a cofactor. It depends on Mn(2+) as a cofactor. As to expression, confined to flowers.

The protein localises to the plastid. The protein resides in the chloroplast. The protein operates within secondary metabolite biosynthesis; terpenoid biosynthesis. Functionally, monoterpene synthase (mono-TPS) involved in the biosynthesis of monoterpenes natural products, constituent of coffee beverage aroma. This is Putative monoterpene synthase 8 from Coffea arabica (Arabian coffee).